The following is a 367-amino-acid chain: Carbohydrate sulfotransferase 14 (367 aa).

Residues 1–34 (MPPRKKEYGIKRASGSLVHFRAPVSATTIRRHSA) are Cytoplasmic-facing. The helical; Signal-anchor for type II membrane protein transmembrane segment at 35-55 (VVPSVLTFAVIVASGGLLLMI) threads the bilayer. The Lumenal portion of the chain corresponds to 56–367 (EKGMLNSVQT…PNTTTEYCRH (312 aa)). N-linked (GlcNAc...) asparagine glycosylation is present at asparagine 99. Residues 144–150 (PKVACSN) and 202–210 (REPMARLLS) contribute to the 3'-phosphoadenylyl sulfate site. An N-linked (GlcNAc...) asparagine glycan is attached at asparagine 359.

The protein belongs to the sulfotransferase 2 family.

The protein localises to the golgi apparatus membrane. Catalyzes the transfer of sulfate to position 4 of the N-acetylgalactosamine (GalNAc) residue of dermatan sulfate. This Danio rerio (Zebrafish) protein is Carbohydrate sulfotransferase 14 (chst14).